We begin with the raw amino-acid sequence, 215 residues long: Urease accessory protein UreG (215 aa).

Position 24–31 (24–31) interacts with GTP; that stretch reads GPVGSGKT.

This sequence belongs to the SIMIBI class G3E GTPase family. UreG subfamily. In terms of assembly, homodimer. UreD, UreF and UreG form a complex that acts as a GTP-hydrolysis-dependent molecular chaperone, activating the urease apoprotein by helping to assemble the nickel containing metallocenter of UreC. The UreE protein probably delivers the nickel.

It is found in the cytoplasm. Its function is as follows. Facilitates the functional incorporation of the urease nickel metallocenter. This process requires GTP hydrolysis, probably effectuated by UreG. The chain is Urease accessory protein UreG from Burkholderia cenocepacia (strain HI2424).